A 141-amino-acid chain; its full sequence is Large ribosomal subunit protein bL17 (141 aa).

The protein belongs to the bacterial ribosomal protein bL17 family. In terms of assembly, part of the 50S ribosomal subunit. Contacts protein L32.

This Maridesulfovibrio salexigens (strain ATCC 14822 / DSM 2638 / NCIMB 8403 / VKM B-1763) (Desulfovibrio salexigens) protein is Large ribosomal subunit protein bL17.